We begin with the raw amino-acid sequence, 232 residues long: Phosphatidylserine decarboxylase proenzyme (232 aa).

S190 (schiff-base intermediate with substrate; via pyruvic acid) is an active-site residue. The residue at position 190 (S190) is a Pyruvic acid (Ser); by autocatalysis.

The protein belongs to the phosphatidylserine decarboxylase family. PSD-A subfamily. Heterodimer of a large membrane-associated beta subunit and a small pyruvoyl-containing alpha subunit. Pyruvate serves as cofactor. Post-translationally, is synthesized initially as an inactive proenzyme. Formation of the active enzyme involves a self-maturation process in which the active site pyruvoyl group is generated from an internal serine residue via an autocatalytic post-translational modification. Two non-identical subunits are generated from the proenzyme in this reaction, and the pyruvate is formed at the N-terminus of the alpha chain, which is derived from the carboxyl end of the proenzyme. The post-translation cleavage follows an unusual pathway, termed non-hydrolytic serinolysis, in which the side chain hydroxyl group of the serine supplies its oxygen atom to form the C-terminus of the beta chain, while the remainder of the serine residue undergoes an oxidative deamination to produce ammonia and the pyruvoyl prosthetic group on the alpha chain.

Its subcellular location is the cell membrane. The catalysed reaction is a 1,2-diacyl-sn-glycero-3-phospho-L-serine + H(+) = a 1,2-diacyl-sn-glycero-3-phosphoethanolamine + CO2. It functions in the pathway phospholipid metabolism; phosphatidylethanolamine biosynthesis; phosphatidylethanolamine from CDP-diacylglycerol: step 2/2. Catalyzes the formation of phosphatidylethanolamine (PtdEtn) from phosphatidylserine (PtdSer). The chain is Phosphatidylserine decarboxylase proenzyme from Cereibacter sphaeroides (strain ATCC 17023 / DSM 158 / JCM 6121 / CCUG 31486 / LMG 2827 / NBRC 12203 / NCIMB 8253 / ATH 2.4.1.) (Rhodobacter sphaeroides).